We begin with the raw amino-acid sequence, 606 residues long: Aspartate--tRNA(Asp/Asn) ligase (606 aa).

Residue glutamate 187 participates in L-aspartate binding. The tract at residues 211–214 (QQFK) is aspartate. L-aspartate contacts are provided by arginine 233 and histidine 461. 233-235 (RDE) contacts ATP. Position 495 (glutamate 495) interacts with ATP. Arginine 502 contacts L-aspartate. Residue 547-550 (GLDR) participates in ATP binding.

This sequence belongs to the class-II aminoacyl-tRNA synthetase family. Type 1 subfamily. As to quaternary structure, homodimer.

It localises to the cytoplasm. The catalysed reaction is tRNA(Asx) + L-aspartate + ATP = L-aspartyl-tRNA(Asx) + AMP + diphosphate. In terms of biological role, aspartyl-tRNA synthetase with relaxed tRNA specificity since it is able to aspartylate not only its cognate tRNA(Asp) but also tRNA(Asn). Reaction proceeds in two steps: L-aspartate is first activated by ATP to form Asp-AMP and then transferred to the acceptor end of tRNA(Asp/Asn). The protein is Aspartate--tRNA(Asp/Asn) ligase of Chlorobium phaeobacteroides (strain DSM 266 / SMG 266 / 2430).